The following is a 450-amino-acid chain: Keratin, type I cytoskeletal 25 (450 aa).

Low complexity predominate over residues 1 to 11 (MSLRLSSASRR). Positions 1–20 (MSLRLSSASRRSCPRPTTGS) are disordered. A head region spans residues 1–78 (MSLRLSSASR…VNERGLLSGN (78 aa)). Residues 79 to 114 (EKVTMQNLNDRLASYLDSVHALEEANADLEQKIKGW) are coil 1A. Positions 79-394 (EKVTMQNLND…LLIGGDDGAC (316 aa)) constitute an IF rod domain. The segment at 115-136 (YEKFGPGSCRGLDHDYSRYFPI) is linker 1. Residues 137–228 (IDDLKNQIIA…KNHKEEMQVL (92 aa)) are coil 1B. Residues 229-251 (QCAAGGNVNVEMNAAPGVDLTVL) are linker 12. A coil 2 region spans residues 252–390 (LNNMRAEYEA…ETYCLLIGGD (139 aa)). The segment at 391 to 450 (DGACKSGGYKSKDYGSGNVGSQVKDPAKAIVVKKVLEEVDQRSKILTTRLHSLEEKSQSN) is tail. Position 442 is a phosphoserine (S442).

Belongs to the intermediate filament family. In terms of assembly, heterodimer of a type I and a type II keratin. Heterodimer with type II keratin KRT5 leading to the formation of keratin intermediate filament (KIF) network. Interacts with KRT6A to form filaments. Strongly expressed in skin and scalp, and weak expression observed in thymus and tongue. In the hair follicle, expressed in Henle layer, Huxley layer and in the inner root sheath cuticle of the hair follicle. Expression extends from the bulb region up to the point of differentiation into the three layers. Also present in the medulla of beard hair (at protein level).

It localises to the cytoplasm. Essential for the proper assembly of type I and type II keratin protein complexes and formation of keratin intermediate filaments in the inner root sheath (irs). Plays a role in the cytoskeleton organization. This is Keratin, type I cytoskeletal 25 from Homo sapiens (Human).